Here is a 3421-residue protein sequence, read N- to C-terminus: Hemocyanin 2 (3421 aa).

The signal sequence occupies residues 1 to 19 (MWTILALLTATLLFEGAFS). Residues 20 to 442 (VDTVVRKNVD…KPPVPVAQAN (423 aa)) are functional unit a (wall). His62 contributes to the Cu cation binding site. Cysteines 68 and 78 form a disulfide. The segment at residues 79–81 (CLH) is a cross-link (2'-(S-cysteinyl)-histidine (Cys-His)). Residues His81, His90, His200, His204, and His231 each contribute to the Cu cation site. 2 disulfide bridges follow: Cys190–Cys257 and Cys344–Cys356. Asn408 is a glycosylation site (N-linked (GlcNAc...) asparagine). A functional unit b (wall) region spans residues 443–853 (LAVRKNINDL…RADAKDFGHS (411 aa)). His483 serves as a coordination point for Cu cation. A disulfide bond links Cys489 and Cys500. The segment at residues 501–503 (CVH) is a cross-link (2'-(S-cysteinyl)-histidine (Cys-His)). The Cu cation site is built by His503, His512, His622, His626, His653, and His894. The cysteines at positions 612 and 678 are disulfide-linked. A WD 1 repeat occupies 632–673 (SEKYSMSSLHYTAFDPIFYLHHSNVDRLWAIWQALQIRRGKS). The interval 854–1275 (RKIRKAVDSL…DEYREAVTSA (422 aa)) is functional unit c (wall). An intrachain disulfide couples Cys900 to Cys911. Residues 912 to 914 (CVH) constitute a cross-link (2'-(S-cysteinyl)-histidine (Cys-His)). Positions 914, 923, 1033, 1037, and 1063 each coordinate Cu cation. Disulfide bonds link Cys1023-Cys1090 and Cys1180-Cys1187. A WD 2 repeat occupies 1043–1084 (NEPYSMSSLRYTTYDPIFFLHRSNTDRLWAIWQALQKYRGKP). Asn1183 carries N-linked (GlcNAc...) asparagine glycosylation. A functional unit d (wall) region spans residues 1276 to 1685 (SHIRKNIRDL…NIYYDGLSQH (410 aa)). His1313 contacts Cu cation. A disulfide bridge connects residues Cys1319 and Cys1328. Residues 1329–1331 (CVH) constitute a cross-link (2'-(S-cysteinyl)-histidine (Cys-His)). 2 residues coordinate Cu cation: His1331 and His1340. Residues 1387–1425 (QTFDPNPFFRGHIAFENAVTSRDPQPELWDNKDFYENVM) form a WD 3 repeat. 2 disulfides stabilise this stretch: Cys1434-Cys1501 and Cys1590-Cys1599. Residues His1444, His1448, and His1475 each contribute to the Cu cation site. A WD 4 repeat occupies 1454 to 1495 (RAKYSLSSLDYTAFDPVFFLHHANVDRIWAIWQDLQRYRKKP). Asn1653 is a glycosylation site (N-linked (GlcNAc...) asparagine). The functional unit e (wall) stretch occupies residues 1686–2102 (NLVRKEVSSL…HGINVRHVGR (417 aa)). Residue His1726 participates in Cu cation binding. Cysteines 1732 and 1743 form a disulfide. A cross-link (2'-(S-cysteinyl)-histidine (Cys-His)) is located at residues 1744–1746 (CLH). His1746, His1755, His1868, His1872, and His1899 together coordinate Cu cation. Intrachain disulfides connect Cys1858/Cys1925 and Cys2014/Cys2020. A WD 5 repeat occupies 1878-1919 (SKTHSIGHLHYASYDPLFYIHHSQTDRIWAIWQALQEHRGLS). Residues 2103 to 2522 (NRIRMELSEL…DDHGSDHIAG (420 aa)) are functional unit f (wall). His2143 is a Cu cation binding site. Residues Cys2149 and Cys2159 are joined by a disulfide bond. Residues 2160 to 2162 (CIH) constitute a cross-link (2'-(S-cysteinyl)-histidine (Cys-His)). The Cu cation site is built by His2162, His2171, His2281, His2285, and His2312. The WD 6 repeat unit spans residues 2168 to 2204 (PHWHRLYTLQMDMALLSHGSAVAIPYWDWTKPISKLP). Intrachain disulfides connect Cys2271–Cys2338 and Cys2425–Cys2431. Residues 2523-2929 (SGVRKDVTSL…SGHDHSERHD (407 aa)) form a functional unit g (internal arc) region. Position 2563 (His2563) interacts with Cu cation. Cys2569 and Cys2579 are oxidised to a cystine. Residues 2580 to 2582 (CTH) constitute a cross-link (2'-(S-cysteinyl)-histidine (Cys-His)). His2582, His2591, His2691, His2695, and His2722 together coordinate Cu cation. Intrachain disulfides connect Cys2681/Cys2748 and Cys2835/Cys2841. One copy of the WD 7 repeat lies at 2700-2742 (GHTPYGMSSLEYTAYDPLFYLHHSNTDRIWAIWQALQKYRGFQ). A disordered region spans residues 2898-2927 (PSDRIKSPTIEHHGGDHHGGDTSGHDHSER). Positions 2930–3421 (GFFRKEVGSL…VRIHIHIEDE (492 aa)) are functional unit h (internal slab). Residue His2970 coordinates Cu cation. A disulfide bond links Cys2976 and Cys2986. A cross-link (2'-(S-cysteinyl)-histidine (Cys-His)) is located at residues 2987-2989 (CVH). 5 residues coordinate Cu cation: His2989, His2998, His3099, His3103, and His3130. Cystine bridges form between Cys3089/Cys3156 and Cys3374/Cys3407. The stretch at 3109-3150 (TETYSMSSLAFSAYDPVFMILHSGLDRLWIIWQELQKLRKKP) is one WD 8 repeat.

It belongs to the tyrosinase family. Hemocyanin subfamily. Homo-didecamer and homo-multidecamer. In terms of processing, probably N-glycosylated. Asn-2489 is buried deeply in the protein which make it inaccessible for sugar attachment. In terms of tissue distribution, hemolymph.

The protein resides in the secreted. The protein localises to the extracellular space. Functionally, hemocyanins are copper-containing oxygen carriers occurring freely dissolved in the hemolymph of many mollusks and arthropods. In Megathura crenulata (Giant keyhole limpet), this protein is Hemocyanin 2.